A 381-amino-acid chain; its full sequence is Trans-enoyl reductase iliB (381 aa).

50-53 (VDGK) is an NADP(+) binding site. 145-152 (ATLATVGL) is a binding site for substrate. NADP(+) is bound by residues 213 to 216 (SPGS), Tyr-231, and 278 to 279 (LD). A substrate-binding site is contributed by 298 to 302 (TYTQF). 367-368 (IS) provides a ligand contact to NADP(+).

Belongs to the zinc-containing alcohol dehydrogenase family. In terms of assembly, monomer.

It catalyses the reaction N-[(4E,6E,10S,12Z,14E)-6,10-dimethyl-3-oxohexadeca-4,6,12,14-tetraenoyl]-L-tyrosyl-[ACP] = (3E,5S)-3-[(2E,4E,8S,10E,12Z)-1-hydroxy-4,8-dimethyltetradeca-2,4,10,12-tetraen-1-ylidene]-5-[(4-hydroxyphenyl)methyl]pyrrolidine-2,4-dione + holo-[ACP] + H(+). It functions in the pathway mycotoxin biosynthesis. Functionally, trans-enoyl reductase; part of the gene cluster that mediates the biosynthesis of ilicicolin H, a 4-hydroxy-2-pyridonealkaloid that has potent and broad antifungal activities by inhibiting the mitochondrial respiration chain. IliB collaborates with the hybrid PKS-NRPS synthetase iliA to assemble the backbone of ilicicolin H. The PKS portion of iliA and trans-acting enoyl reductase iliB work together to construct an octaketide, and two methyl groups are introduced by the MT domain of iliA during the chain assembly. The nascent chain is then condensed with tyrosine, catalyzed by the iliA C domain, and the resulting PKS-NRPS hybrid is offloaded by the iliA RED domain to form an advanced tetramic acid intermediate. The biosynthesis of ilicicolin H starts with formation of the tetramic acid by the hybrid PKS-NRPS synthetase iliA with the partnering trans-enoyl reductase iliB since iliA lacks a designated enoylreductase (ER) domain. The cytochrome P450 monooxygenase iliC then catalyzes the ring expansion of the tetramate to the acyclic 2-pyridone. The pericyclase iliD further converts the acyclic 2-pyridone into 8-epi-ilicicolin H. 8-epi-ilicicolin H might then spontaneously convert to ilicicolin H since ilicicolin H is produced in the absence of the epimerase iliE, in contrast to what was observed for the Talaromyces variabilis ilicolin H biosynthetic pathway. The protein is Trans-enoyl reductase iliB of Neonectria sp. (strain DH2).